The primary structure comprises 443 residues: Differentially expressed in FDCP 8 homolog A (443 aa).

Residues 1 to 49 are disordered; that stretch reads MEYDDKLVRFRQGHLNPFDKQGGAERHPADSEAQPPKDSSTISPHSIPE. 2 Phorbol-ester/DAG-type zinc fingers span residues 134–185 and 364–424; these read EHRF…TKPC and IHTT…STSC.

The protein belongs to the DEF8 family.

In terms of biological role, positively regulates lysosome peripheral distribution and ruffled border formation in osteoclasts. Involved in bone resorption. The polypeptide is Differentially expressed in FDCP 8 homolog A (def8-a) (Xenopus laevis (African clawed frog)).